The primary structure comprises 428 residues: Serine--tRNA ligase (428 aa).

An L-serine-binding site is contributed by 231-233; sequence TAE. Residues 262 to 264 and V278 each bind ATP; that span reads RRE. E285 is an L-serine binding site. 349–352 contributes to the ATP binding site; that stretch reads EVSS. S384 is an L-serine binding site.

It belongs to the class-II aminoacyl-tRNA synthetase family. Type-1 seryl-tRNA synthetase subfamily. Homodimer. The tRNA molecule binds across the dimer.

Its subcellular location is the cytoplasm. The enzyme catalyses tRNA(Ser) + L-serine + ATP = L-seryl-tRNA(Ser) + AMP + diphosphate + H(+). The catalysed reaction is tRNA(Sec) + L-serine + ATP = L-seryl-tRNA(Sec) + AMP + diphosphate + H(+). Its pathway is aminoacyl-tRNA biosynthesis; selenocysteinyl-tRNA(Sec) biosynthesis; L-seryl-tRNA(Sec) from L-serine and tRNA(Sec): step 1/1. Catalyzes the attachment of serine to tRNA(Ser). Is also able to aminoacylate tRNA(Sec) with serine, to form the misacylated tRNA L-seryl-tRNA(Sec), which will be further converted into selenocysteinyl-tRNA(Sec). The protein is Serine--tRNA ligase of Chlamydia muridarum (strain MoPn / Nigg).